Consider the following 291-residue polypeptide: 33 kDa chaperonin (291 aa).

Cystine bridges form between Cys-237–Cys-239 and Cys-270–Cys-273.

The protein belongs to the HSP33 family. Under oxidizing conditions two disulfide bonds are formed involving the reactive cysteines. Under reducing conditions zinc is bound to the reactive cysteines and the protein is inactive.

The protein resides in the cytoplasm. Its function is as follows. Redox regulated molecular chaperone. Protects both thermally unfolding and oxidatively damaged proteins from irreversible aggregation. Plays an important role in the bacterial defense system toward oxidative stress. This chain is 33 kDa chaperonin, found in Halalkalibacterium halodurans (strain ATCC BAA-125 / DSM 18197 / FERM 7344 / JCM 9153 / C-125) (Bacillus halodurans).